We begin with the raw amino-acid sequence, 815 residues long: (-)-kolavenyl diphosphate synthase TPS10, chloroplastic (815 aa).

A chloroplast-targeting transit peptide spans 1–50; that stretch reads MFMSSSSSSHARRPQLSSFSYLHPPLPFPGLSFSSTRDKRVNFDSTRIIS. Lysine 247 contributes to the substrate binding site. Positions 379 and 381 each coordinate Mg(2+). The short motif at 379–382 is the DXDD motif element; that stretch reads DIDD. Substrate is bound at residue lysine 465.

Belongs to the terpene synthase family. Tpsc subfamily. Mg(2+) is required as a cofactor.

The protein resides in the plastid. The protein localises to the chloroplast. It carries out the reaction (2E,6E,10E)-geranylgeranyl diphosphate = (-)-kolavenyl diphosphate. Its activity is regulated as follows. Inhibited by high concentrations of magnesium. Diterpene synthase that catalyzes the formation of (-)-kolavenyl diphosphate from geranylgeranyl diphosphate (GGPP). In Tripterygium wilfordii (Thunder God vine), this protein is (-)-kolavenyl diphosphate synthase TPS10, chloroplastic.